The primary structure comprises 505 residues: ATP synthase subunit alpha, chloroplastic (505 aa).

170-177 (GDRQTGKT) provides a ligand contact to ATP.

The protein belongs to the ATPase alpha/beta chains family. In terms of assembly, F-type ATPases have 2 components, CF(1) - the catalytic core - and CF(0) - the membrane proton channel. CF(1) has five subunits: alpha(3), beta(3), gamma(1), delta(1), epsilon(1). CF(0) has four main subunits: a, b, b' and c.

The protein resides in the plastid. The protein localises to the chloroplast thylakoid membrane. The catalysed reaction is ATP + H2O + 4 H(+)(in) = ADP + phosphate + 5 H(+)(out). In terms of biological role, produces ATP from ADP in the presence of a proton gradient across the membrane. The alpha chain is a regulatory subunit. This Mesostigma viride (Green alga) protein is ATP synthase subunit alpha, chloroplastic.